The chain runs to 318 residues: MLEAAGAVLLGSAALLMVGRLGNRGFFLWLRTVGILGLLVGILSLALAALTGSAIAGLVVGVITAAMMYLFSSRIVRIQMGAVDAEEFLRYKPEYADKLRRVQEMVSKLASKAGLPEPELVVVPEETGVGGYPNAFATGRRSKPTVGVTEGLLRHLDDDEIYGVLGHELAHVKNRDTLVMTVAAAVSTAIAYAFDPWLNAMYTEDWEDIAFLVLAGMLASLISTLLVAAISRSREYLADEEGAKLSGNPMALAEALEKIEAIVKSNPAPARSLSEVSTAHLWIENPFRGGLLRLFSTHPPVEKRVERLRRLARELQGP.

3 helical membrane passes run 1 to 21 (MLEA…VGRL), 35 to 55 (ILGL…GSAI), and 56 to 76 (AGLV…SRIV). His167 is a binding site for Zn(2+). The active site involves Glu168. His171 is a binding site for Zn(2+). 2 consecutive transmembrane segments (helical) span residues 178 to 198 (LVMT…DPWL) and 209 to 229 (IAFL…LVAA). Zn(2+) is bound at residue Glu235.

The protein belongs to the peptidase M48B family. Requires Zn(2+) as cofactor.

The protein localises to the cell membrane. In Methanopyrus kandleri (strain AV19 / DSM 6324 / JCM 9639 / NBRC 100938), this protein is Protease HtpX homolog.